Consider the following 163-residue polypeptide: NADH-quinone oxidoreductase subunit I (163 aa).

4Fe-4S ferredoxin-type domains follow at residues 54 to 84 and 94 to 123; these read LRRY…IESE and TRYD…ETRI. [4Fe-4S] cluster contacts are provided by cysteine 64, cysteine 67, cysteine 70, cysteine 74, cysteine 103, cysteine 106, cysteine 109, and cysteine 113.

Belongs to the complex I 23 kDa subunit family. NDH-1 is composed of 14 different subunits. Subunits NuoA, H, J, K, L, M, N constitute the membrane sector of the complex. The cofactor is [4Fe-4S] cluster.

The protein localises to the cell inner membrane. The enzyme catalyses a quinone + NADH + 5 H(+)(in) = a quinol + NAD(+) + 4 H(+)(out). In terms of biological role, NDH-1 shuttles electrons from NADH, via FMN and iron-sulfur (Fe-S) centers, to quinones in the respiratory chain. The immediate electron acceptor for the enzyme in this species is believed to be ubiquinone. Couples the redox reaction to proton translocation (for every two electrons transferred, four hydrogen ions are translocated across the cytoplasmic membrane), and thus conserves the redox energy in a proton gradient. This Methylobacillus flagellatus (strain ATCC 51484 / DSM 6875 / VKM B-1610 / KT) protein is NADH-quinone oxidoreductase subunit I.